The sequence spans 111 residues: UPF0060 membrane protein XCC2880 (111 aa).

The next 4 membrane-spanning stretches (helical) occupy residues 8-28, 34-54, 62-82, and 91-111; these read LLLF…PYLW, SVWL…LLTL, VYAA…WWVD, and LLGA…PRSG.

Belongs to the UPF0060 family.

It localises to the cell inner membrane. The chain is UPF0060 membrane protein XCC2880 from Xanthomonas campestris pv. campestris (strain ATCC 33913 / DSM 3586 / NCPPB 528 / LMG 568 / P 25).